Here is a 274-residue protein sequence, read N- to C-terminus: Ribosome biogenesis protein UTP30 (274 aa).

The protein belongs to the universal ribosomal protein uL1 family. Highly divergent. As to quaternary structure, component of the 90S pre-ribosomes. Interacts with FAF1.

It localises to the nucleus. The protein localises to the nucleolus. In terms of biological role, involved in rRNA-processing and ribosome biosynthesis. The protein is Ribosome biogenesis protein UTP30 (UTP30) of Saccharomyces cerevisiae (strain ATCC 204508 / S288c) (Baker's yeast).